The following is a 376-amino-acid chain: Ribosomal RNA large subunit methyltransferase G (376 aa).

This sequence belongs to the methyltransferase superfamily. RlmG family.

The protein localises to the cytoplasm. The enzyme catalyses guanosine(1835) in 23S rRNA + S-adenosyl-L-methionine = N(2)-methylguanosine(1835) in 23S rRNA + S-adenosyl-L-homocysteine + H(+). In terms of biological role, specifically methylates the guanine in position 1835 (m2G1835) of 23S rRNA. The sequence is that of Ribosomal RNA large subunit methyltransferase G from Klebsiella pneumoniae (strain 342).